The following is a 680-amino-acid chain: Zinc finger protein 334 (680 aa).

In terms of domain architecture, KRAB spans 10–81 (VSFQDLTVNF…EEFSNQNYPD (72 aa)). C2H2-type zinc fingers lie at residues 237–259 (NECN…QRIH), 265–287 (YVCS…RRIH), 293–315 (YECS…QKIH), 321–343 (YECN…FRSH), 349–371 (YECK…QRTH), 377–399 (NECK…QRIH), 405–427 (YECS…RRSH), 433–455 (YECS…QITH), 461–483 (YECN…QRTH), 544–566 (YECN…QRTH), 572–594 (YECN…QRTH), 600–622 (YECN…RRIH), 628–650 (YECN…QKIH), and 656–678 (YECN…QKSH).

It belongs to the krueppel C2H2-type zinc-finger protein family.

Its subcellular location is the nucleus. May be involved in transcriptional regulation. In Homo sapiens (Human), this protein is Zinc finger protein 334 (ZNF334).